The chain runs to 313 residues: CRISPR-associated endonuclease Cas1 1 (313 aa).

Mn(2+) is bound by residues Glu144, His211, and Asp224. The interval 288-313 (PPLDAPEAVDPVIPPEEPSGDDGHRG) is disordered.

The protein belongs to the CRISPR-associated endonuclease Cas1 family. In terms of assembly, homodimer, forms a heterotetramer with a Cas2 homodimer. Mg(2+) serves as cofactor. The cofactor is Mn(2+).

CRISPR (clustered regularly interspaced short palindromic repeat), is an adaptive immune system that provides protection against mobile genetic elements (viruses, transposable elements and conjugative plasmids). CRISPR clusters contain spacers, sequences complementary to antecedent mobile elements, and target invading nucleic acids. CRISPR clusters are transcribed and processed into CRISPR RNA (crRNA). Acts as a dsDNA endonuclease. Involved in the integration of spacer DNA into the CRISPR cassette. The chain is CRISPR-associated endonuclease Cas1 1 from Rhodospirillum rubrum (strain ATCC 11170 / ATH 1.1.1 / DSM 467 / LMG 4362 / NCIMB 8255 / S1).